Reading from the N-terminus, the 365-residue chain is Aminomethyltransferase (365 aa).

It belongs to the GcvT family. As to quaternary structure, the glycine cleavage system is composed of four proteins: P, T, L and H.

The enzyme catalyses N(6)-[(R)-S(8)-aminomethyldihydrolipoyl]-L-lysyl-[protein] + (6S)-5,6,7,8-tetrahydrofolate = N(6)-[(R)-dihydrolipoyl]-L-lysyl-[protein] + (6R)-5,10-methylene-5,6,7,8-tetrahydrofolate + NH4(+). In terms of biological role, the glycine cleavage system catalyzes the degradation of glycine. The protein is Aminomethyltransferase of Yersinia pestis bv. Antiqua (strain Antiqua).